Reading from the N-terminus, the 176-residue chain is SDCQVSNIQVMQNFDRSRYTGRWYAVAKKDPVGLFLLDNVVAQFSVDGSGKVTATAQGRVIILNNWEMCANMFGTFEDTPDPAKFKMRYWGAAAYLQSGNDDHWVIDTDYDNYAIHYSCREVDLDGTCLDGYSFIFSRHPTGLRPEDQKIVTDKKKELCFLGKYRRVSHTGFCESS.

N-acetylserine is present on Ser-1. Cystine bridges form between Cys-3–Cys-159, Cys-69–Cys-173, and Cys-119–Cys-128. Gln-97 contributes to the substrate binding site.

The protein belongs to the calycin superfamily. Lipocalin family.

The protein localises to the secreted. RBP delivers retinol from the liver stores to the peripheral tissues. In plasma, the RBP-retinol complex interacts with transthyretin, this prevents its loss by filtration through the kidney glomeruli. The chain is Retinol-binding protein 4-B (rbp4b) from Oncorhynchus mykiss (Rainbow trout).